The sequence spans 495 residues: Ribitol 5-phosphate transferase FKRP (495 aa).

Residues 1–6 lie on the Cytoplasmic side of the membrane; the sequence is MRLTRC. Residues 7-29 form a helical membrane-spanning segment; that stretch reads QAALAAAITLNLLVLFYVSWLQH. The Lumenal segment spans residues 30 to 495; it reads QPRNSRARGP…PALLSLTGSG (466 aa). The cysteines at positions 168 and 191 are disulfide-linked. Residues asparagine 172 and asparagine 209 are each glycosylated (N-linked (GlcNAc...) asparagine). Residues cysteine 289, cysteine 296, cysteine 317, and cysteine 318 each contribute to the Zn(2+) site. A zinc finger loop region spans residues 289–318; that stretch reads CNKETTRCFGTVVGDTPAYLYEERWTPPCC. Residues glycine 345, arginine 352, 359-364, 437-438, and 480-482 each bind CDP-L-ribitol; these read WDYDVD, QD, and NPQ. Mg(2+) is bound by residues aspartate 360, aspartate 362, and aspartate 364.

It belongs to the LicD transferase family. In terms of assembly, homodimer; disulfide-linked. Tetramer. Forms a complex composed of FKRP, FKTN/fukutin, and RXYLT1/TMEM5. Also exists as large multimeric protein complexes. May interact with the dystrophin-glycoprotein complex (DGC). Mg(2+) serves as cofactor. N-glycosylated. As to expression, expressed in the retina (at protein level). Expressed predominantly in skeletal muscle, placenta, and heart and relatively weakly in brain, lung, liver, kidney, and pancreas.

It is found in the golgi apparatus membrane. The protein localises to the secreted. It localises to the cell membrane. The protein resides in the sarcolemma. Its subcellular location is the rough endoplasmic reticulum. It is found in the cytoplasm. It carries out the reaction 3-O-[Rib-ol-P-3-beta-D-GalNAc-(1-&gt;3)-beta-D-GlcNAc-(1-&gt;4)-(O-6-P-alpha-D-Man)]-Thr-[protein] + CDP-L-ribitol = 3-O-[Rib-ol-P-Rib-ol-P-3-beta-D-GalNAc-(1-&gt;3)-beta-D-GlcNAc-(1-&gt;4)-(O-6-P-alpha-D-Man)]-Thr-[protein] + CMP + H(+). It participates in protein modification; protein glycosylation. Its function is as follows. Catalyzes the transfer of a ribitol 5-phosphate from CDP-L-ribitol to the ribitol 5-phosphate previously attached by FKTN/fukutin to the phosphorylated O-mannosyl trisaccharide (N-acetylgalactosamine-beta-3-N-acetylglucosamine-beta-4-(phosphate-6-)mannose), a carbohydrate structure present in alpha-dystroglycan (DAG1). This constitutes the second step in the formation of the ribose 5-phosphate tandem repeat which links the phosphorylated O-mannosyl trisaccharide to the ligand binding moiety composed of repeats of 3-xylosyl-alpha-1,3-glucuronic acid-beta-1. This Homo sapiens (Human) protein is Ribitol 5-phosphate transferase FKRP.